Here is a 75-residue protein sequence, read N- to C-terminus: Carwaprin-b (75 aa).

An N-terminal signal peptide occupies residues 1 to 24 (MSSGGLLLLLGLLTLWAELTPVSS). The 46-residue stretch at 27–72 (RPKKPGLCPPRPQKPPCVRECKNDWRCPGEQKCCRYGCIYECRDPI) folds into the WAP domain. 4 disulfides stabilise this stretch: Cys34–Cys60, Cys43–Cys64, Cys47–Cys59, and Cys53–Cys68.

The protein belongs to the venom waprin family. In terms of tissue distribution, expressed by the venom gland.

It localises to the secreted. Functionally, damages membranes of susceptible bacteria. Has no hemolytic activity. Not toxic to mice. Does not inhibit the proteinases elastase and cathepsin G. The polypeptide is Carwaprin-b (Tropidechis carinatus (Australian rough-scaled snake)).